A 147-amino-acid polypeptide reads, in one-letter code: Phosphoribosyl-AMP cyclohydrolase (147 aa).

Asp-91 contacts Mg(2+). Cys-92 is a binding site for Zn(2+). Mg(2+) contacts are provided by Asp-93 and Asp-95. Zn(2+) is bound by residues Cys-109 and Cys-116.

Belongs to the PRA-CH family. As to quaternary structure, homodimer. The cofactor is Mg(2+). It depends on Zn(2+) as a cofactor.

It is found in the cytoplasm. It carries out the reaction 1-(5-phospho-beta-D-ribosyl)-5'-AMP + H2O = 1-(5-phospho-beta-D-ribosyl)-5-[(5-phospho-beta-D-ribosylamino)methylideneamino]imidazole-4-carboxamide. It functions in the pathway amino-acid biosynthesis; L-histidine biosynthesis; L-histidine from 5-phospho-alpha-D-ribose 1-diphosphate: step 3/9. Functionally, catalyzes the hydrolysis of the adenine ring of phosphoribosyl-AMP. This Rhodopseudomonas palustris (strain BisB18) protein is Phosphoribosyl-AMP cyclohydrolase.